A 346-amino-acid chain; its full sequence is Very-long-chain 3-oxoacyl-CoA reductase (346 aa).

Residues 19-39 form a helical membrane-spanning segment; it reads VLLGALLVGVFKLTVFILSVT. NADP(+) contacts are provided by Val65, Asp119, Asn146, Tyr220, Lys224, Val253, and Ser255. Tyr220 acts as the Proton donor in catalysis. Catalysis depends on Lys224, which acts as the Lowers pKa of active site Tyr.

Belongs to the short-chain dehydrogenases/reductases (SDR) family.

Its subcellular location is the endoplasmic reticulum membrane. The enzyme catalyses a very-long-chain (3R)-3-hydroxyacyl-CoA + NADP(+) = a very-long-chain 3-oxoacyl-CoA + NADPH + H(+). It participates in lipid metabolism; fatty acid biosynthesis. In terms of biological role, component of the microsomal membrane bound fatty acid elongation system, which produces the 26-carbon very long-chain fatty acids (VLCFA) from palmitate. Catalyzes the reduction of the 3-ketoacyl-CoA intermediate that is formed in each cycle of fatty acid elongation. VLCFAs serve as precursors for ceramide and sphingolipids. The sequence is that of Very-long-chain 3-oxoacyl-CoA reductase from Scheffersomyces stipitis (strain ATCC 58785 / CBS 6054 / NBRC 10063 / NRRL Y-11545) (Yeast).